The primary structure comprises 184 residues: Protein GrpE (184 aa).

The span at M1–E10 shows a compositional bias: acidic residues. Residues M1–V22 form a disordered region.

This sequence belongs to the GrpE family. Homodimer.

It is found in the cytoplasm. Functionally, participates actively in the response to hyperosmotic and heat shock by preventing the aggregation of stress-denatured proteins, in association with DnaK and GrpE. It is the nucleotide exchange factor for DnaK and may function as a thermosensor. Unfolded proteins bind initially to DnaJ; upon interaction with the DnaJ-bound protein, DnaK hydrolyzes its bound ATP, resulting in the formation of a stable complex. GrpE releases ADP from DnaK; ATP binding to DnaK triggers the release of the substrate protein, thus completing the reaction cycle. Several rounds of ATP-dependent interactions between DnaJ, DnaK and GrpE are required for fully efficient folding. The chain is Protein GrpE from Chlamydia pneumoniae (Chlamydophila pneumoniae).